We begin with the raw amino-acid sequence, 151 residues long: MNQKEQNEHSKDFNLRSKLIGIVSITFIAAIALAVIFGGFFFGMKGLFSILGITYASNQTLALFILACFAVGLIIDPLTKIISIILAKSLSLKKTALFAFILYFISNLITICFADYFMQSIYIPDVLLVVISAFMAIIELAFDNQPNREAA.

Transmembrane regions (helical) follow at residues 22–42, 62–82, 97–117, and 121–141; these read IVSITFIAAIALAVIFGGFFF, ALFILACFAVGLIIDPLTKII, LFAFILYFISNLITICFADYF, and IYIPDVLLVVISAFMAIIELA.

The protein resides in the cell membrane. This is an uncharacterized protein from Bacillus subtilis (strain 168).